The chain runs to 425 residues: Proteinase-activated receptor 1 (425 aa).

The first 21 residues, 1 to 21 (MGPRRLLLVAACLCLCGPLLS), serve as a signal peptide directing secretion. A propeptide spans 22-41 (ARTRARRPASKATNATLDPR) (removed for receptor activation). 3 N-linked (GlcNAc...) asparagine glycosylation sites follow: Asn35, Asn62, and Asn75. Topologically, residues 42 to 102 (SFLLRNPNDK…SGYLTSSWLT (61 aa)) are extracellular. Residues 103-128 (LFVPSVYTGVFVVSLPVNIMAIVVFI) form a helical membrane-spanning segment. The Cytoplasmic segment spans residues 129 to 137 (LKMKVKKPA). Residues 138 to 157 (VVYMLHLATADVLFVSVLPF) traverse the membrane as a helical segment. At 158–176 (KISYYLSGSDWQFGSELCR) the chain is on the extracellular side. A disulfide bridge links Cys175 with Cys254. A helical transmembrane segment spans residues 177–198 (FVTAAFYCNMYASILLMTVISI). Residues 199–218 (DRFLAVVYPMQSLSWRTLGR) are Cytoplasmic-facing. Residues 219–239 (ASFTCLAIWALAIAGVVPLLL) form a helical membrane-spanning segment. Residues 240–268 (KEQTIQVPGLNITTCHDVLNETLLEGYYA) are Extracellular-facing. Asn250 and Asn259 each carry an N-linked (GlcNAc...) asparagine glycan. A helical membrane pass occupies residues 269–288 (YYFSAFSAVFFFVPLIISTV). The Cytoplasmic segment spans residues 289 to 311 (CYVSIIRCLSSSTVANRSKKSRA). Residues 312–334 (LFLSAAVFCIFIICFGPTNILLI) traverse the membrane as a helical segment. Residues 335-350 (AHYSFLSHTSTTEAAY) lie on the Extracellular side of the membrane. A helical membrane pass occupies residues 351 to 374 (FAYLLCVCVSSISCCIDPLIYYYA). The Cytoplasmic segment spans residues 375–425 (SSECQRYVYSILCCKESSDPSSSNSSGQLMASKMDTCSSNLNNSIYKKLLT). The residue at position 418 (Ser418) is a Phosphoserine.

Belongs to the G-protein coupled receptor 1 family. Proteolytic cleavage by thrombin generates a new N-terminus that functions as a tethered ligand. Also proteolytically cleaved by cathepsin CTSG. Cleavage at 41-Arg-|-Ser-42 by CTSG results in receptor activation while cleavage at 55-Phe-|-Trp-56 results in inhibition of receptor activation. Post-translationally, phosphorylated in the C-terminal tail; probably mediating desensitization prior to the uncoupling and internalization of the receptor.

It localises to the cell membrane. In terms of biological role, high affinity receptor that binds the activated thrombin, leading to calcium release from intracellular stores. The thrombin-activated receptor signaling pathway is mediated through PTX-insensitive G proteins, activation of phospholipase C resulting in the production of 1D-myo-inositol 1,4,5-trisphosphate (InsP3) which binds to InsP3 receptors causing calcium release from the stores. In astrocytes, the calcium released into the cytosol allows the Ca(2+)-dependent release of L-glutamate into the synaptic cleft through BEST1, that targets the neuronal postsynaptic GRIN2A/NMDAR receptor resulting in the synaptic plasticity regulation. May play a role in platelets activation and in vascular development. Mediates up-regulation of pro-inflammatory cytokines, such as MCP-1/CCL2 and IL6, triggered by coagulation factor Xa (F10) in cardiac fibroblasts and umbilical vein endothelial cells. In Papio hamadryas (Hamadryas baboon), this protein is Proteinase-activated receptor 1.